The sequence spans 168 residues: NADH-quinone oxidoreductase subunit B (168 aa).

Positions 49, 50, 114, and 144 each coordinate [4Fe-4S] cluster.

The protein belongs to the complex I 20 kDa subunit family. In terms of assembly, NDH-1 is composed of 14 different subunits. Subunits NuoB, C, D, E, F, and G constitute the peripheral sector of the complex. [4Fe-4S] cluster is required as a cofactor.

It is found in the cell membrane. The enzyme catalyses a quinone + NADH + 5 H(+)(in) = a quinol + NAD(+) + 4 H(+)(out). In terms of biological role, NDH-1 shuttles electrons from NADH, via FMN and iron-sulfur (Fe-S) centers, to quinones in the respiratory chain. Couples the redox reaction to proton translocation (for every two electrons transferred, four hydrogen ions are translocated across the cytoplasmic membrane), and thus conserves the redox energy in a proton gradient. In Wolbachia sp. subsp. Brugia malayi (strain TRS), this protein is NADH-quinone oxidoreductase subunit B.